We begin with the raw amino-acid sequence, 408 residues long: DNA primase DnaG (408 aa).

The Toprim domain occupies 172–248; that stretch reads DSIIIVEGRA…HVDYIARAPP (77 aa). 3 residues coordinate Mg(2+): E178, D222, and D224. Residues 279-304 form a disordered region; the sequence is AAGEKAETPQQPPPQQPVPQQEVREE.

This sequence belongs to the archaeal DnaG primase family. Forms a ternary complex with MCM helicase and DNA. Component of the archaeal exosome complex. It depends on Mg(2+) as a cofactor.

The enzyme catalyses ssDNA + n NTP = ssDNA/pppN(pN)n-1 hybrid + (n-1) diphosphate.. RNA polymerase that catalyzes the synthesis of short RNA molecules used as primers for DNA polymerase during DNA replication. Also part of the exosome, which is a complex involved in RNA degradation. Acts as a poly(A)-binding protein that enhances the interaction between heteromeric, adenine-rich transcripts and the exosome. This is DNA primase DnaG from Pyrobaculum aerophilum (strain ATCC 51768 / DSM 7523 / JCM 9630 / CIP 104966 / NBRC 100827 / IM2).